The chain runs to 369 residues: Anhydro-N-acetylmuramic acid kinase (369 aa).

12-19 (GTSLDGVD) contributes to the ATP binding site.

It belongs to the anhydro-N-acetylmuramic acid kinase family.

The enzyme catalyses 1,6-anhydro-N-acetyl-beta-muramate + ATP + H2O = N-acetyl-D-muramate 6-phosphate + ADP + H(+). It participates in amino-sugar metabolism; 1,6-anhydro-N-acetylmuramate degradation. It functions in the pathway cell wall biogenesis; peptidoglycan recycling. Catalyzes the specific phosphorylation of 1,6-anhydro-N-acetylmuramic acid (anhMurNAc) with the simultaneous cleavage of the 1,6-anhydro ring, generating MurNAc-6-P. Is required for the utilization of anhMurNAc either imported from the medium or derived from its own cell wall murein, and thus plays a role in cell wall recycling. This Escherichia coli (strain SE11) protein is Anhydro-N-acetylmuramic acid kinase.